The following is a 178-amino-acid chain: Large ribosomal subunit protein uL5 (178 aa).

The residue at position 2 (alanine 2) is an N-acetylalanine. Lysine 38 participates in a covalent cross-link: Glycyl lysine isopeptide (Lys-Gly) (interchain with G-Cter in SUMO2). Threonine 44 and threonine 47 each carry phosphothreonine. Lysine 52 is modified (N6-acetyllysine; alternate). A Glycyl lysine isopeptide (Lys-Gly) (interchain with G-Cter in SUMO2); alternate cross-link involves residue lysine 52. Lysine 85 carries the N6-acetyllysine modification. A Glycyl lysine isopeptide (Lys-Gly) (interchain with G-Cter in SUMO2) cross-link involves residue lysine 154.

It belongs to the universal ribosomal protein uL5 family. In terms of assembly, component of the large ribosomal subunit (LSU). Part of the 5S RNP complex, which is a LSU subcomplex composed of the 5S RNA, RPL5 and RPL11. Component of a hexameric 5S RNP precursor complex, composed of 5S RNA, RRS1, RPF2/BXDC1, RPL5, RPL11 and HEATR3; this complex acts as a precursor for ribosome assembly. Interacts with PML. Interacts with MDM2 (via its RanBP2-type zinc finger domain); negatively regulates MDM2-mediated TP53 ubiquitination and degradation. Interacts with NOP53; retains RPL11 into the nucleolus.

It localises to the nucleus. The protein resides in the nucleolus. Its subcellular location is the cytoplasm. Its function is as follows. Component of the ribosome, a large ribonucleoprotein complex responsible for the synthesis of proteins in the cell. The small ribosomal subunit (SSU) binds messenger RNAs (mRNAs) and translates the encoded message by selecting cognate aminoacyl-transfer RNA (tRNA) molecules. The large subunit (LSU) contains the ribosomal catalytic site termed the peptidyl transferase center (PTC), which catalyzes the formation of peptide bonds, thereby polymerizing the amino acids delivered by tRNAs into a polypeptide chain. The nascent polypeptides leave the ribosome through a tunnel in the LSU and interact with protein factors that function in enzymatic processing, targeting, and the membrane insertion of nascent chains at the exit of the ribosomal tunnel. As part of the 5S RNP/5S ribonucleoprotein particle it is an essential component of the LSU, required for its formation and the maturation of rRNAs. It also couples ribosome biogenesis to p53/TP53 activation. As part of the 5S RNP it accumulates in the nucleoplasm and inhibits MDM2, when ribosome biogenesis is perturbed, mediating the stabilization and the activation of TP53. Promotes nucleolar location of PML. This chain is Large ribosomal subunit protein uL5 (RPL11), found in Pongo abelii (Sumatran orangutan).